The sequence spans 131 residues: Large ribosomal subunit protein bL17 (131 aa).

This sequence belongs to the bacterial ribosomal protein bL17 family. As to quaternary structure, part of the 50S ribosomal subunit. Contacts protein L32.

The sequence is that of Large ribosomal subunit protein bL17 from Hamiltonella defensa subsp. Acyrthosiphon pisum (strain 5AT).